A 291-amino-acid chain; its full sequence is Cilia- and flagella-associated protein 298 (291 aa).

Belongs to the CFAP298 family.

This Drosophila melanogaster (Fruit fly) protein is Cilia- and flagella-associated protein 298.